A 140-amino-acid chain; its full sequence is MRLTYFLTVIVVATLHAGGTALATAEAPNHAAIVNVASADNVHSLDTTAEIGGRMLRKVKEDTVSKKDHEERGPGAILERQTAFVKKLFSRQNAIVNRAQGAFQRQNAFVNRDQGAFQRQNAFVKRAIQRQNHFKLSDNA.

An N-terminal signal peptide occupies residues 1-21; the sequence is MRLTYFLTVIVVATLHAGGTA. Positions 54 to 72 match the RxLR-dEER motif; the sequence is RMLRKVKEDTVSKKDHEER. The stretch at 100 to 113 is one ADA2-binding IR1 repeat; the sequence is QGAFQRQNAFVNRD. The stretch at 114 to 127 is one ADA2-binding IR2 repeat; the sequence is QGAFQRQNAFVKRA.

Belongs to the RxLR effector family. Interacts with host histone acetyl transferase SAGA complex subunit ADA2.

It localises to the secreted. It is found in the host nucleus. The protein resides in the host cytoplasm. Effector that suppresses plant defense responses during the early stages of pathogen infection. Suppresses cell death induced by effectors and PAMPs in plant hosts. Acts as a modulator of histone acetyltransferase (HAT) in plants. Avh23 binds to the ADA2 subunit of the HAT complex SAGA and disrupts its assembly by interfering with the association of ADA2 with the catalytic subunit GCN5. As such, Avh23 suppresses H3K9 acetylation mediated by the ADA2/GCN5 module and increases plant susceptibility. The protein is RxLR effector protein Avh23 of Phytophthora sojae (Soybean stem and root rot agent).